The following is a 339-amino-acid chain: Sphingolipid long chain base-responsive protein PIL1 (339 aa).

The segment covering 1 to 19 (MHRTYSLRNSRAPTASQLQ) has biased composition (polar residues). Residues 1–31 (MHRTYSLRNSRAPTASQLQNPPPPPSTTKGR) are disordered. Residue T14 is modified to Phosphothreonine. Residue S16 is modified to Phosphoserine. A Glycyl lysine isopeptide (Lys-Gly) (interchain with G-Cter in ubiquitin) cross-link involves residue K29. 4 positions are modified to phosphoserine: S45, S98, S163, and S230. T233 is modified (phosphothreonine). A disordered region spans residues 273-339 (SFKQDYEDFE…SESLPQQTTA (67 aa)). Residues 279 to 293 (EDFEPEEGEEEEEED) are compositionally biased toward acidic residues. A Phosphoserine modification is found at S299. Over residues 301–318 (DEQEDGQIEEPEQEEEGA) the composition is skewed to acidic residues. Residues 326–339 (GHQQSESLPQQTTA) are compositionally biased toward polar residues.

Phosphorylated by PKH1 and PKH2. Phosphorylation is inhibited by sphingolipid long chain bases (LCBs).

It is found in the lipid droplet. Negative regulator of cell wall integrity (CWI) in unstressed cells, probably by inhibiting protein kinase PKH1/PHK2 activity and regulating their downstream CWI pathways PKC1-MAP kinase pathway and protein kinase YPK1 pathway. Activity may be regulated by the transient increase of sphingolipid long chain bases (LCBs) during heat stress. This is Sphingolipid long chain base-responsive protein PIL1 (PIL1) from Saccharomyces cerevisiae (strain ATCC 204508 / S288c) (Baker's yeast).